The following is a 484-amino-acid chain: E-selectin (484 aa).

The first 22 residues, M1–A22, serve as a signal peptide directing secretion. In terms of domain architecture, C-type lectin spans W23–Y140. The Extracellular segment spans residues W23–P429. Cystine bridges form between C41/C139, C112/C131, C144/C155, C149/C164, C166/C175, C181/C222, C194/C204, C208/C235, C240/C285, C271/C298, C303/C348, C334/C361, C366/C407, and C393/C420. N-linked (GlcNAc...) asparagine glycans are attached at residues N61, N65, and N79. Ca(2+) is bound by residues E102, N104, and E110. Residues E102–E110, E114–R119, and N127–E129 each bind a carbohydrate. Positions 127 and 128 each coordinate Ca(2+). The EGF-like domain occupies T141–E176. N-linked (GlcNAc...) asparagine glycosylation is present at N160. 4 Sushi domains span residues V179–A237, V251–A300, V301–V363, and V364–A422. The N-linked (GlcNAc...) asparagine glycan is linked to N201. N254 is a glycosylation site (N-linked (GlcNAc...) asparagine). Residues N376 and N400 are each glycosylated (N-linked (GlcNAc...) asparagine). A helical transmembrane segment spans residues L430–L451. Over L452–I484 the chain is Cytoplasmic.

It belongs to the selectin/LECAM family. Interacts with SELPLG/PSGL1 and PODXL2 through the sialyl Lewis X epitope. SELPLG sulfation appears not to be required for this interaction.

It localises to the cell membrane. Cell-surface glycoprotein having a role in immunoadhesion. Mediates in the adhesion of blood neutrophils in cytokine-activated endothelium through interaction with SELPLG/PSGL1. May have a role in capillary morphogenesis. This is E-selectin (SELE) from Sus scrofa (Pig).